Here is a 731-residue protein sequence, read N- to C-terminus: Inclusion body clearance protein IML2 (731 aa).

The disordered stretch occupies residues Met-1 to Gln-26. A compositionally biased stretch (polar residues) spans Ser-10–Gln-26. Ser-265, Ser-268, and Ser-378 each carry phosphoserine. Phosphothreonine is present on Thr-380. Residues Ser-383 and Ser-392 each carry the phosphoserine modification.

The protein belongs to the IML2 family. As to quaternary structure, interacts with lipid droplet proteins PET10 and PDR16.

Its subcellular location is the cytoplasm. It localises to the nucleus. Its function is as follows. Inclusion body (IB) resident protein that interacts strongly with lipid droplet (LD) proteins. Involved in LD-mediated IB clearing after protein folding stress, probably by enabling access to the IBs of an LD-stored soluble sterol derivative that acts as a chaperone in inclusion clearing. The polypeptide is Inclusion body clearance protein IML2 (Saccharomyces cerevisiae (strain ATCC 204508 / S288c) (Baker's yeast)).